The sequence spans 533 residues: MGFKKFFGIRPPEEDTPERNRDLLTEEGIATKNPNSFRKEKFAAYGKFAAANAQDHVYAPAGYEQYARPGAGADKDELESLNRAATDAGDIGNTSRVGQPQQRDPYAVNDNYNPYANGTARDPYATAQPYARQAPVRQAGPRHAAGTPYGSAAVPQGGPGNPYGGSTAGAGTGRNPYQKNMNATVYPPAAGKTANPYASMAQDPYGKGEQRGIAGGPVAMPVPMQPRPQAAAETPRPQAAAEKRAPAVDVDDLNAVIEPTNEDDDLNNSIHEGNEGLNGQGQAPRRGFQTFEELQREQEMKQQMEEDEEVDEIKQQIRFTKQSSVASTRNTLKMAQDAELAGMNSLGMLGHQSEKLNNVERNLNLMKVQNRVAEDKVAELKRLNRNILAVHVGNPFTSKRKVREAEERIKNQRMQDKMQQEETTTQLMSSTNRIENALNDERHSVRERYQRDQALERAKKYQFENDEEDDEMEFEIDRNLDKIGQVSGRLKKLAIAAGQEIDSQQSRIKRIEEDADDMDIRIHLNTSRLTNIR.

4 disordered regions span residues 1–32, 68–184, 200–246, and 259–284; these read MGFK…IATK, RPGA…MNAT, MAQD…KRAP, and PTNE…GQAP. Residues 11–24 are compositionally biased toward basic and acidic residues; sequence PPEEDTPERNRDLL. The segment covering 92-102 has biased composition (polar residues); that stretch reads GNTSRVGQPQQ. Positions 157–172 are enriched in gly residues; the sequence is GGPGNPYGGSTAGAGT. Low complexity predominate over residues 227-240; that stretch reads RPQAAAETPRPQAA. T-SNARE coiled-coil homology domains are found at residues 318-380 and 470-532; these read RFTK…VAEL and DEME…LTNI.

It belongs to the SNAP-25 family.

In Eremothecium gossypii (strain ATCC 10895 / CBS 109.51 / FGSC 9923 / NRRL Y-1056) (Yeast), this protein is Protein transport protein SEC9 (SEC9).